The primary structure comprises 699 residues: Catalase-peroxidase (699 aa).

A cross-link (tryptophyl-tyrosyl-methioninium (Trp-Tyr) (with M-226)) is located at residues 72–200; sequence WHSAGTYRIA…LAAVMMGLIY (129 aa). The active-site Proton acceptor is the His-73. The tryptophyl-tyrosyl-methioninium (Tyr-Met) (with W-72) cross-link spans 200–226; that stretch reads YVNPEGVDGNPDPLKTAKDMRVTFARM. His-241 provides a ligand contact to heme b.

Belongs to the peroxidase family. Peroxidase/catalase subfamily. In terms of assembly, homodimer or homotetramer. Heme b serves as cofactor. In terms of processing, formation of the three residue Trp-Tyr-Met cross-link is important for the catalase, but not the peroxidase activity of the enzyme.

The catalysed reaction is H2O2 + AH2 = A + 2 H2O. The enzyme catalyses 2 H2O2 = O2 + 2 H2O. Bifunctional enzyme with both catalase and broad-spectrum peroxidase activity. The chain is Catalase-peroxidase from Aeromonas salmonicida (strain A449).